Here is a 118-residue protein sequence, read N- to C-terminus: MNKIDAIEMEQMKKNIPGFRPGDTVKVQVKIVEGDKSRIQAFQGVVIGRQNGGIRESFTVRKISNGVGVERSFPLHSPSIDAIEVITRGQVRRAKLYYLRKLRGKASRIKEKKYVAGM.

It belongs to the bacterial ribosomal protein bL19 family.

Functionally, this protein is located at the 30S-50S ribosomal subunit interface and may play a role in the structure and function of the aminoacyl-tRNA binding site. This is Large ribosomal subunit protein bL19 from Geotalea daltonii (strain DSM 22248 / JCM 15807 / FRC-32) (Geobacter daltonii).